Here is a 378-residue protein sequence, read N- to C-terminus: MQLPTFLEVYEGLISTSSISSTDPSWDQGNAKVIEKLATWFKDLGFHVEVIEVESGKHNMIARMGEGEGGLLLAGHSDTVPFDEGRWSFDPHKLTEKDNRFYGLGTADMKGFFAFIYEAVKKVDWSKQNKPLYVLATCDEETTMLGARHFTTNAPFKPDYCIIGEPTSLVPIRGHKGHVANAIRVTGKSGHSSDPALGVNAIEIMHEVLFAMMQLRDKLIKEYHHPGFAIPSPTLNLGHIHGGDSANRICGCCELHYDVRPLPGISLDGLENMLRSALQEVEAKWPGRIDIVPLHEPIPGYECQHDHPFIGGVEEICQTSSQTVNYCTEAPFLQQLCPTLVLGPGSIEQAHQPDEFLSFDFIDPTIDVLSKAMVKYCC.

Residue histidine 76 coordinates Zn(2+). Aspartate 78 is a catalytic residue. Aspartate 108 is a binding site for Zn(2+). Glutamate 140 is an active-site residue. The Zn(2+) site is built by glutamate 141, glutamate 165, and histidine 351.

This sequence belongs to the peptidase M20A family. ArgE subfamily. In terms of assembly, homodimer. Zn(2+) is required as a cofactor. Co(2+) serves as cofactor. The cofactor is glutathione.

Its subcellular location is the cytoplasm. The enzyme catalyses N(2)-acetyl-L-ornithine + H2O = L-ornithine + acetate. It functions in the pathway amino-acid biosynthesis; L-arginine biosynthesis; L-ornithine from N(2)-acetyl-L-ornithine (linear): step 1/1. In terms of biological role, catalyzes the hydrolysis of the amide bond of N(2)-acetylated L-amino acids. Cleaves the acetyl group from N-acetyl-L-ornithine to form L-ornithine, an intermediate in L-arginine biosynthesis pathway, and a branchpoint in the synthesis of polyamines. The polypeptide is Acetylornithine deacetylase (Vibrio parahaemolyticus serotype O3:K6 (strain RIMD 2210633)).